A 128-amino-acid chain; its full sequence is Disintegrin ocellatusin (128 aa).

An N-terminal signal peptide occupies residues 1-20 (MIPVLLVTICLAVFPFQGSS). A propeptide spanning residues 21-65 (IILESGNINDYEIVYPKKVAVLPTGAMNSAHPCYDPVTCQPKEKE) is cleaved from the precursor. The Disintegrin domain occupies 26-112 (GNINDYEIVY…DCPRNPYKGE (87 aa)). 5 cysteine pairs are disulfide-bonded: Cys-53/Cys-59, Cys-67/Cys-76, Cys-72/Cys-97, Cys-73/Cys-102, and Cys-85/Cys-104. Residues 89 to 91 (RGD) carry the Cell attachment site motif. Residues 116-128 (MEWPAPAKGSVLM) constitute a propeptide that is removed on maturation.

In terms of assembly, monomer. In terms of tissue distribution, expressed by the venom gland.

Its subcellular location is the secreted. Its function is as follows. The disintegrin ocellatusin-10c1 is a poor inhibitor of platelet aggregation. The disintegrin inhibits the adhesion of cells expressing the RGD-dependent integrin alpha-5/beta-1 (ITGA5/ITGB1) to immobilized fibronectin. Inhibition on alpha-2b/beta-3 (ITGA2B/ITGB3) is low, and there is no inhibition on alpha-1/beta-1 (ITGA1/ITGB1), alpha-2/beta-1 (ITGA2/ITGB1) and alpha-6/beta-1 (ITGA6/ITGB1). In terms of biological role, the short monomeric disintegrin ocellatusin inhibits ADP-induced platelet aggregation (IC(50)=168 nM). Inhibits alpha-5/beta-1 (ITGA5/ITGB1) integrin and induces the expression of a ligand-induced binding site epitope on beta-1 integrin subunit. Has a direct chemotactic stimulus on human neutrophils in vitro. This chain is Disintegrin ocellatusin, found in Echis ocellatus (Ocellated saw-scaled viper).